A 124-amino-acid chain; its full sequence is uncharacterized protein (124 aa).

The disordered stretch occupies residues 1–28 (MGTSLRSQSFREPRPSYGRLHESQGRSL). Over residues 9-28 (SFREPRPSYGRLHESQGRSL) the composition is skewed to basic and acidic residues.

This is an uncharacterized protein from Mus musculus (Mouse).